Consider the following 95-residue polypeptide: Co-chaperonin GroES (95 aa).

The protein belongs to the GroES chaperonin family. Heptamer of 7 subunits arranged in a ring. Interacts with the chaperonin GroEL.

The protein localises to the cytoplasm. Functionally, together with the chaperonin GroEL, plays an essential role in assisting protein folding. The GroEL-GroES system forms a nano-cage that allows encapsulation of the non-native substrate proteins and provides a physical environment optimized to promote and accelerate protein folding. GroES binds to the apical surface of the GroEL ring, thereby capping the opening of the GroEL channel. The protein is Co-chaperonin GroES of Geobacter metallireducens (strain ATCC 53774 / DSM 7210 / GS-15).